A 106-amino-acid chain; its full sequence is Small ribosomal subunit protein uS10 (106 aa).

It belongs to the universal ribosomal protein uS10 family. In terms of assembly, part of the 30S ribosomal subunit.

Functionally, involved in the binding of tRNA to the ribosomes. The protein is Small ribosomal subunit protein uS10 of Synechococcus sp. (strain CC9605).